A 75-amino-acid chain; its full sequence is Supwaprin-a (75 aa).

An N-terminal signal peptide occupies residues 1–24 (MSSGGLLLLLGFLTLWAELTPVSG). A WAP domain is found at 27–72 (RPKKPGLCPPRPQKPPCVRECKNDWSCPGEQKCCRYGCIFECRDPI). 4 disulfide bridges follow: Cys34–Cys60, Cys43–Cys64, Cys47–Cys59, and Cys53–Cys68.

It belongs to the venom waprin family. In terms of tissue distribution, expressed by the venom gland.

It is found in the secreted. Its function is as follows. Damages membranes of susceptible bacteria. Has no hemolytic activity. Not toxic to mice. Does not inhibit the proteinases elastase and cathepsin G. This chain is Supwaprin-a, found in Austrelaps superbus (Lowland copperhead snake).